A 542-amino-acid polypeptide reads, in one-letter code: Phosphoglucomutase (542 aa).

Substrate contacts are provided by residues threonine 17, arginine 21, 112–113 (SH), and lysine 125. The Phosphoserine intermediate role is filled by serine 112. Serine 112 is a Mg(2+) binding site. Mg(2+) contacts are provided by aspartate 276, aspartate 278, and aspartate 280. Substrate-binding positions include 280–281 (DR), threonine 343, 362–364 (EES), lysine 375, and arginine 495.

It belongs to the phosphohexose mutase family. It depends on Mg(2+) as a cofactor.

The catalysed reaction is alpha-D-glucose 1-phosphate = alpha-D-glucose 6-phosphate. Its function is as follows. This enzyme participates in both the breakdown and synthesis of glucose. Required for the synthesis of capsular polysaccharide and normal lipopolysaccharide. This chain is Phosphoglucomutase (pgm), found in Rhizobium radiobacter (Agrobacterium tumefaciens).